We begin with the raw amino-acid sequence, 105 residues long: Heat shock protein HspQ (105 aa).

Belongs to the HspQ family.

It localises to the cytoplasm. Functionally, involved in the degradation of certain denaturated proteins, including DnaA, during heat shock stress. In Escherichia fergusonii (strain ATCC 35469 / DSM 13698 / CCUG 18766 / IAM 14443 / JCM 21226 / LMG 7866 / NBRC 102419 / NCTC 12128 / CDC 0568-73), this protein is Heat shock protein HspQ.